Reading from the N-terminus, the 667-residue chain is Sorting nexin mvp1 (667 aa).

The tract at residues 221 to 268 is disordered; sequence AGNLHSQQPPKFSVDSSVDDNAITPRKPFSKIPNRLSPSTQPLLSNSR. Polar residues predominate over residues 224 to 236; that stretch reads LHSQQPPKFSVDS. One can recognise a PX domain in the interval 279-398; the sequence is TSFPASLEMN…RVFFTEPNVF (120 aa). The a 1,2-diacyl-sn-glycero-3-phospho-(1D-myo-inositol-3-phosphate) site is built by arginine 320, serine 322, and lysine 346. Residues 574–594 form a disordered region; sequence ANSDESGRNRTFLNRSSKKRA.

This sequence belongs to the sorting nexin family. Homodimer. Forms an autoinhibited tetramer consisting of 2 homodimers that self-interact, wherein the membrane-interacting BAR surfaces are sequestered and the PX lipid-binding sites are occluded. Interacts with Vps1.

The protein resides in the cytoplasm. It is found in the endosome membrane. Required for vacuolar protein sorting. Component of the retromer-mediated endosome-to-Golgi retrograde pathway. Required for efficient cargo export from the endosome, promoting Vps1-mediated fission of retromer-coated tubules that bud from the endosome. The sequence is that of Sorting nexin mvp1 (mvp1) from Schizosaccharomyces pombe (strain 972 / ATCC 24843) (Fission yeast).